The following is a 447-amino-acid chain: Drebrin-like protein A (447 aa).

Residues 2–133 form the ADF-H domain; it reads SVNLSKNGAA…EPESIMEKVA (132 aa). 2 disordered regions span residues 141–160 and 184–368; these read NFHK…VGSV and KDEE…TENQ. Residues 180 to 245 are a coiled coil; it reads AKAEKDEEER…EQEETEKQQT (66 aa). Residues 184–242 are compositionally biased toward basic and acidic residues; sequence KDEEERRMEENRRANSEKDRLERERKEREQREAETREQRFRERAKEIDAQRKEQEETEK. Residues 246-255 show a composition bias toward polar residues; sequence VPASQRSVNP. Over residues 319-328 the composition is skewed to pro residues; sequence PESPVPPVSH. Over residues 345-365 the composition is skewed to acidic residues; sequence QEEENIYQDATEDQNIYEDTT. An SH3 domain is found at 388-447; sequence EKGVCARALYDYQAADDTEISFDPDDLITQIQFIDEGWWRGFSPAGHFGMFPANYVELLE.

The protein belongs to the ABP1 family.

It localises to the cytoplasm. Its subcellular location is the cytoskeleton. The protein resides in the cell projection. The protein localises to the lamellipodium. It is found in the ruffle. It localises to the cell cortex. Its subcellular location is the cytosol. The protein resides in the synapse. The protein localises to the perikaryon. It is found in the neuron projection. It localises to the cell membrane. Its subcellular location is the cytoplasmic vesicle. The protein resides in the clathrin-coated vesicle membrane. The protein localises to the golgi apparatus membrane. It is found in the podosome. It localises to the early endosome. Its subcellular location is the dendrite. The protein resides in the postsynaptic density. Functionally, adapter protein that binds F-actin and dynamin, and thereby plays a role in receptor-mediated endocytosis. Plays a role in the reorganization of the actin cytoskeleton, formation of cell projections, such as neurites, in neuron morphogenesis and synapse formation. Does not bind G-actin and promote actin polymerization by itself, but excerts its functions by interaction with other proteins. Required for the formation of organized podosome rosettes. The chain is Drebrin-like protein A (dbnl-a) from Xenopus laevis (African clawed frog).